Reading from the N-terminus, the 374-residue chain is Speckle-type POZ protein B (374 aa).

The MATH domain occupies 31-161; it reads KFSYMWTINN…DDKLTLFCEV (131 aa). The interval 71-191 is required for nuclear localization; the sequence is VNPKGLDEES…PECRLSDELG (121 aa). One can recognise a BTB domain in the interval 173-297; it reads QNTMNMVKVP…MCEEALCSNL (125 aa). The interval 297 to 355 is homodimerization; it reads LSVENAAEILILADLHSADQLKTQAVDFINYHASDVMETSGWKSMVVSHPHLVAEAYRS.

Belongs to the Tdpoz family. Homodimer. Part of cullin-RING-based BCR (BTB-CUL3-RBX1) E3 ubiquitin-protein ligase complexes that contain CUL3 and SPOP, plus a target protein.

The protein resides in the nucleus. The protein localises to the nucleus speckle. It functions in the pathway protein modification; protein ubiquitination. Its function is as follows. Component of a cullin-RING-based BCR (BTB-CUL3-RBX1) E3 ubiquitin-protein ligase complex that mediates the ubiquitination of target proteins, leading most often to their proteasomal degradation. The sequence is that of Speckle-type POZ protein B (spop-b) from Xenopus laevis (African clawed frog).